The sequence spans 615 residues: Dihydroxy-acid dehydratase (615 aa).

Aspartate 81 contacts Mg(2+). Cysteine 122 contributes to the [2Fe-2S] cluster binding site. Mg(2+)-binding residues include aspartate 123 and lysine 124. Residue lysine 124 is modified to N6-carboxylysine. [2Fe-2S] cluster is bound at residue cysteine 195. Residue glutamate 491 participates in Mg(2+) binding. Serine 517 (proton acceptor) is an active-site residue.

It belongs to the IlvD/Edd family. Homodimer. [2Fe-2S] cluster serves as cofactor. It depends on Mg(2+) as a cofactor.

It carries out the reaction (2R)-2,3-dihydroxy-3-methylbutanoate = 3-methyl-2-oxobutanoate + H2O. The catalysed reaction is (2R,3R)-2,3-dihydroxy-3-methylpentanoate = (S)-3-methyl-2-oxopentanoate + H2O. The protein operates within amino-acid biosynthesis; L-isoleucine biosynthesis; L-isoleucine from 2-oxobutanoate: step 3/4. Its pathway is amino-acid biosynthesis; L-valine biosynthesis; L-valine from pyruvate: step 3/4. In terms of biological role, functions in the biosynthesis of branched-chain amino acids. Catalyzes the dehydration of (2R,3R)-2,3-dihydroxy-3-methylpentanoate (2,3-dihydroxy-3-methylvalerate) into 2-oxo-3-methylpentanoate (2-oxo-3-methylvalerate) and of (2R)-2,3-dihydroxy-3-methylbutanoate (2,3-dihydroxyisovalerate) into 2-oxo-3-methylbutanoate (2-oxoisovalerate), the penultimate precursor to L-isoleucine and L-valine, respectively. The chain is Dihydroxy-acid dehydratase from Shewanella pealeana (strain ATCC 700345 / ANG-SQ1).